Reading from the N-terminus, the 466-residue chain is Amidase (466 aa).

Catalysis depends on charge relay system residues K79 and S148. Positions 128-152 are disordered; it reads YGRITPKSRNPRDPGRTPGGSSGGS. Catalysis depends on S172, which acts as the Acyl-ester intermediate.

It belongs to the amidase family.

The catalysed reaction is a monocarboxylic acid amide + H2O = a monocarboxylate + NH4(+). In Pseudomonas putida (Arthrobacter siderocapsulatus), this protein is Amidase.